We begin with the raw amino-acid sequence, 311 residues long: Coproporphyrin III ferrochelatase 1 (311 aa).

Residues tyrosine 12, arginine 29, 45-46, serine 53, and tyrosine 124 contribute to the Fe-coproporphyrin III site; that span reads RY. Residues histidine 182 and glutamate 263 each coordinate Fe(2+).

This sequence belongs to the ferrochelatase family.

The protein resides in the cytoplasm. It catalyses the reaction Fe-coproporphyrin III + 2 H(+) = coproporphyrin III + Fe(2+). It participates in porphyrin-containing compound metabolism; protoheme biosynthesis. Involved in coproporphyrin-dependent heme b biosynthesis. Catalyzes the insertion of ferrous iron into coproporphyrin III to form Fe-coproporphyrin III. The polypeptide is Coproporphyrin III ferrochelatase 1 (Bacillus anthracis).